We begin with the raw amino-acid sequence, 110 residues long: uncharacterized protein (110 aa).

A signal peptide spans 1–26 (MIRNVLLAFMICSGMTLLGGCSSVMS). Residues 87–110 (RVEKSEANAQATNAVIPPARMPDN) form a disordered region.

The protein to E.coli YceK.

This is an uncharacterized protein from Escherichia coli (strain K12).